We begin with the raw amino-acid sequence, 80 residues long: Large ribosomal subunit protein bL31B (80 aa).

It belongs to the bacterial ribosomal protein bL31 family. Type B subfamily. As to quaternary structure, part of the 50S ribosomal subunit.

The sequence is that of Large ribosomal subunit protein bL31B from Oenococcus oeni (strain ATCC BAA-331 / PSU-1).